Here is a 301-residue protein sequence, read N- to C-terminus: Glycerol-3-phosphate dehydrogenase [NAD(P)+] (301 aa).

The NADPH site is built by Trp-13, Arg-33, and Lys-78. Sn-glycerol 3-phosphate-binding residues include Lys-78 and Gly-106. NADPH is bound at residue Ala-110. Positions 161, 214, 224, 225, and 226 each coordinate sn-glycerol 3-phosphate. The active-site Proton acceptor is Lys-161. Residue Arg-225 participates in NADPH binding. NADPH is bound at residue Glu-251.

Belongs to the NAD-dependent glycerol-3-phosphate dehydrogenase family.

The protein localises to the cytoplasm. It carries out the reaction sn-glycerol 3-phosphate + NAD(+) = dihydroxyacetone phosphate + NADH + H(+). It catalyses the reaction sn-glycerol 3-phosphate + NADP(+) = dihydroxyacetone phosphate + NADPH + H(+). It participates in membrane lipid metabolism; glycerophospholipid metabolism. In terms of biological role, catalyzes the reduction of the glycolytic intermediate dihydroxyacetone phosphate (DHAP) to sn-glycerol 3-phosphate (G3P), the key precursor for phospholipid synthesis. The protein is Glycerol-3-phosphate dehydrogenase [NAD(P)+] of Synechococcus sp. (strain RCC307).